The chain runs to 78 residues: Colicin-V immunity protein (78 aa).

This protein is able to protect a cell, which harbors the plasmid ColV encoding colicin V, against colicin V. This Escherichia coli protein is Colicin-V immunity protein (cvi).